A 309-amino-acid chain; its full sequence is Foldase protein PrsA (309 aa).

Positions 1-22 are cleaved as a signal peptide; the sequence is MKTRSKLAAGFLTLMSVATLAA. A lipid anchor (N-palmitoyl cysteine) is attached at cysteine 23. A lipid anchor (S-diacylglycerol cysteine) is attached at cysteine 23. The 96-residue stretch at 146 to 241 folds into the PpiC domain; the sequence is TPETSVQVIK…TSYYIIKVTD (96 aa).

Belongs to the PrsA family.

It is found in the cell membrane. The enzyme catalyses [protein]-peptidylproline (omega=180) = [protein]-peptidylproline (omega=0). Functionally, plays a major role in protein secretion by helping the post-translocational extracellular folding of several secreted proteins. The protein is Foldase protein PrsA of Streptococcus agalactiae serotype V (strain ATCC BAA-611 / 2603 V/R).